A 79-amino-acid chain; its full sequence is Small ribosomal subunit protein bS18 (79 aa).

Belongs to the bacterial ribosomal protein bS18 family. In terms of assembly, part of the 30S ribosomal subunit. Forms a tight heterodimer with protein bS6.

Functionally, binds as a heterodimer with protein bS6 to the central domain of the 16S rRNA, where it helps stabilize the platform of the 30S subunit. This is Small ribosomal subunit protein bS18 from Bradyrhizobium sp. (strain BTAi1 / ATCC BAA-1182).